Here is a 650-residue protein sequence, read N- to C-terminus: Acetyl-coenzyme A synthetase (650 aa).

CoA is bound by residues 191 to 194 (RGGR), threonine 311, and asparagine 335. ATP-binding positions include 387-389 (GEP), 411-416 (DTWWQT), aspartate 500, and arginine 515. Serine 523 is a CoA binding site. Arginine 526 contributes to the ATP binding site. Residues valine 537, histidine 539, and valine 542 each contribute to the Mg(2+) site. Residue arginine 584 coordinates CoA. Position 609 is an N6-acetyllysine (lysine 609).

This sequence belongs to the ATP-dependent AMP-binding enzyme family. Mg(2+) serves as cofactor. Acetylated. Deacetylation by the SIR2-homolog deacetylase activates the enzyme.

The enzyme catalyses acetate + ATP + CoA = acetyl-CoA + AMP + diphosphate. Catalyzes the conversion of acetate into acetyl-CoA (AcCoA), an essential intermediate at the junction of anabolic and catabolic pathways. AcsA undergoes a two-step reaction. In the first half reaction, AcsA combines acetate with ATP to form acetyl-adenylate (AcAMP) intermediate. In the second half reaction, it can then transfer the acetyl group from AcAMP to the sulfhydryl group of CoA, forming the product AcCoA. This is Acetyl-coenzyme A synthetase from Shewanella baltica (strain OS195).